The following is a 179-amino-acid chain: Large ribosomal subunit protein uL6 (179 aa).

The protein belongs to the universal ribosomal protein uL6 family. Part of the 50S ribosomal subunit.

This protein binds to the 23S rRNA, and is important in its secondary structure. It is located near the subunit interface in the base of the L7/L12 stalk, and near the tRNA binding site of the peptidyltransferase center. The protein is Large ribosomal subunit protein uL6 of Beutenbergia cavernae (strain ATCC BAA-8 / DSM 12333 / CCUG 43141 / JCM 11478 / NBRC 16432 / NCIMB 13614 / HKI 0122).